A 355-amino-acid polypeptide reads, in one-letter code: MIEKLQVIEEKYLELEKKISDPEIISQPQEWQKLMKEHSNLQPIVEKFREYKRILDTIKEAEELLDTDLDEDFEKLVKEELNRAKEQKEIVETQLKILLLPKDPNDEKNVIMEIRAGAGGEEAALFAAELFRMYSRYAERKNWKVEVMSTSESDLDGFKEVIFMISGKGAYSRLKYESGVHRVQRVPVTESGGRIHTSTATVAVLPEVEDVEVEIREEDLEIDTFRAGGAGGQHVNKTESAVRIVHKPTGIVVTCQDERSQHANRDRAMKILRARLYDYYQSIQQKEIESQRRSQVGTGDRSERIRTYNFPQGRVTDHRIGLTLYKLEQILDGELDEIIDALITHFQTERLKEIG.

At Gln233 the chain carries N5-methylglutamine.

This sequence belongs to the prokaryotic/mitochondrial release factor family. Methylated by PrmC. Methylation increases the termination efficiency of RF1.

It localises to the cytoplasm. In terms of biological role, peptide chain release factor 1 directs the termination of translation in response to the peptide chain termination codons UAG and UAA. The polypeptide is Peptide chain release factor 1 (Caldicellulosiruptor bescii (strain ATCC BAA-1888 / DSM 6725 / KCTC 15123 / Z-1320) (Anaerocellum thermophilum)).